Consider the following 80-residue polypeptide: Metallothionein-like protein type 2, MT2-4/MT2-25 (80 aa).

The protein belongs to the metallothionein superfamily. Type 15 family.

Its function is as follows. Metallothioneins have a high content of cysteine residues that bind various heavy metals. This chain is Metallothionein-like protein type 2, MT2-4/MT2-25, found in Brassica juncea (Indian mustard).